Consider the following 95-residue polypeptide: Aspartyl/glutamyl-tRNA(Asn/Gln) amidotransferase subunit C (95 aa).

It belongs to the GatC family. As to quaternary structure, heterotrimer of A, B and C subunits.

The catalysed reaction is L-glutamyl-tRNA(Gln) + L-glutamine + ATP + H2O = L-glutaminyl-tRNA(Gln) + L-glutamate + ADP + phosphate + H(+). It carries out the reaction L-aspartyl-tRNA(Asn) + L-glutamine + ATP + H2O = L-asparaginyl-tRNA(Asn) + L-glutamate + ADP + phosphate + 2 H(+). Its function is as follows. Allows the formation of correctly charged Asn-tRNA(Asn) or Gln-tRNA(Gln) through the transamidation of misacylated Asp-tRNA(Asn) or Glu-tRNA(Gln) in organisms which lack either or both of asparaginyl-tRNA or glutaminyl-tRNA synthetases. The reaction takes place in the presence of glutamine and ATP through an activated phospho-Asp-tRNA(Asn) or phospho-Glu-tRNA(Gln). This Pseudomonas fluorescens (strain SBW25) protein is Aspartyl/glutamyl-tRNA(Asn/Gln) amidotransferase subunit C.